The chain runs to 533 residues: Putative phosphate permease HP_1491 (533 aa).

12 helical membrane passes run 23 to 43 (IALALLFLIGAALLALIFGQA), 47 to 67 (GLLLIFAAVIGGYMAMNIGAN), 81 to 101 (AISMGGAILIAAICEMLGAII), 129 to 149 (VMLASLLSGALWLHVATLIGA), 156 to 176 (SVVGGIMGAGMAAAGMVAVNW), 182 to 202 (IVASWVISPLMGALIAMFFLM), 221 to 241 (VVPYLVALMSLTFSWYLIVKV), 248 to 268 (LNFEIQLACGCILALLIFILF), 286 to 306 (INELFNVPLIFAAALLSFAHG), 338 to 358 (VPLWIMVVGAAGIALGLSLYG), 372 to 392 (LDKMQAFCIALSAVITVLLAS), and 509 to 529 (LVTVPVSALLGALLFVALGFI).

The protein belongs to the inorganic phosphate transporter (PiT) (TC 2.A.20) family.

The protein localises to the cell membrane. In terms of biological role, potential transporter for phosphate. This is Putative phosphate permease HP_1491 from Helicobacter pylori (strain ATCC 700392 / 26695) (Campylobacter pylori).